The following is a 111-amino-acid chain: Large ribosomal subunit protein uL22 (111 aa).

Belongs to the universal ribosomal protein uL22 family. In terms of assembly, part of the 50S ribosomal subunit.

Its function is as follows. This protein binds specifically to 23S rRNA; its binding is stimulated by other ribosomal proteins, e.g. L4, L17, and L20. It is important during the early stages of 50S assembly. It makes multiple contacts with different domains of the 23S rRNA in the assembled 50S subunit and ribosome. In terms of biological role, the globular domain of the protein is located near the polypeptide exit tunnel on the outside of the subunit, while an extended beta-hairpin is found that lines the wall of the exit tunnel in the center of the 70S ribosome. The protein is Large ribosomal subunit protein uL22 of Citrifermentans bemidjiense (strain ATCC BAA-1014 / DSM 16622 / JCM 12645 / Bem) (Geobacter bemidjiensis).